We begin with the raw amino-acid sequence, 534 residues long: MSKRNPKILKIFLYMLLLNSLFLIIYFVFHSSSFSPEQSQPPHIYHVSVNNQSAIQKPWPILPSYLPWTPPQRNLPTGSCEGYFGNGFTKRVDFLKPRIGGGGEGSWFRCFYSETLQSSICEGRNLRMVPDRIVMSRGGEKLEEVMGRKEEEELPAFRQGAFEVAEEVSSRLGFKRHRRFGGGEGGSAVSRRLVNDEMLNEYMQEGGIDRHTMRDLVASIRAVDTNDFVCEEWVEEPTLLVTRFEYANLFHTVTDWYSAYVSSRVTGLPNRPHVVFVDGHCTTQLEETWTALFSGIRYAKNFTKPVCFRHAILSPLGYETALFKGLSGEIDCKGDSAHNLWQNPDDKRTARISEFGEMIRAAFGLPVNRHRSLEKPLSSSSSSASVYNVLFVRREDYLAHPRHGGKVQSRLINEEEVFDSLHHWVATGSTGLTKCGINLVNGLLAHMSMKDQVRAIQDASVIIGAHGAGLTHIVSATPNTTIFEIISVEFQRPHFELIAKWKGLEYHAMHLANSRAEPTAVIEKLTEIMKSLGC.

Topologically, residues 1–11 (MSKRNPKILKI) are cytoplasmic. A helical; Signal-anchor for type II membrane protein transmembrane segment spans residues 12–34 (FLYMLLLNSLFLIIYFVFHSSSF). Topologically, residues 35 to 534 (SPEQSQPPHI…LTEIMKSLGC (500 aa)) are lumenal. N-linked (GlcNAc...) asparagine glycosylation is found at N51, N301, and N479.

Glycosylation at least at one of the two sites Asn-51 and Asn-301 is necessary for enzyme stability and activity.

It is found in the golgi apparatus membrane. The enzyme catalyses N(4)-{beta-D-GlcNAc-(1-&gt;2)-alpha-D-Man-(1-&gt;3)-[beta-D-GlcNAc-(1-&gt;2)-alpha-D-Man-(1-&gt;6)]-beta-D-Man-(1-&gt;4)-beta-D-GlcNAc-(1-&gt;4)-beta-D-GlcNAc}-L-asparaginyl-[protein] + UDP-alpha-D-xylose = N(4)-{beta-D-GlcNAc-(1-&gt;2)-alpha-D-Man-(1-&gt;3)-[beta-D-GlcNAc-(1-&gt;2)-alpha-D-Man-(1-&gt;6)]-[beta-D-Xyl-(1-&gt;2)]-beta-D-Man-(1-&gt;4)-beta-D-GlcNAc-(1-&gt;4)-beta-D-GlcNAc}-L-asparaginyl-[protein] + UDP + H(+). Its pathway is protein modification; protein glycosylation. In terms of biological role, glycosyltransferase involved in the xylosylation of N-glycans. Possesses beta-1,2-xylosyltransferase activity, transferring xylose from UDP-xylose to the core beta-linked mannose of N-glycans. Involved in the biosynthesis of glycoprotein bound N-glycans. Does not require metal ions for its activity. The protein is Beta-1,2-xylosyltransferase of Arabidopsis thaliana (Mouse-ear cress).